The primary structure comprises 511 residues: MSVELWQQCVELLRDELPAQQFNTWIRPLQVEAEGDELRVYAPNRFVLDWVNEKYLGRLLELLGERGQGMAPALSLLIGSKRSSAPRAAPNAPLAAAASQALSGNSVSSVSASAPAMAVPAPMVAAPVPVHNVATHDEPSRDSFDPMAGASSQQAPARAEQRTVQVEGALKHTSYLNRTFTFENFVEGKSNQLARAAAWQVADNPKHGYNPLFLYGGVGLGKTHLMHAVGNHLLKKNPNAKVVYLHSERFVADMVKALQLNAINEFKRFYRSVDALLIDDIQFFARKERSQEEFFHTFNALLEGGQQVILTSDRYPKEIEGLEERLKSRFGWGLTVAVEPPELETRVAILMKKADQAKVDLPHDAAFFIAQRIRSNVRELEGALKRVIAHSHFMGRDITIELIRESLKDLLALQDKLVSVDNIQRTVAEYYKIKISDLLSKRRSRSVARPRQVAMALSKELTNHSLPEIGDVFGGRDHTTVLHACRKINELKESDADIREDYKNLLRTLTT.

The interval 1 to 87 (MSVELWQQCV…IGSKRSSAPR (87 aa)) is domain I, interacts with DnaA modulators. The segment at 87–174 (RAAPNAPLAA…QVEGALKHTS (88 aa)) is domain II. The interval 133–160 (VATHDEPSRDSFDPMAGASSQQAPARAE) is disordered. Basic and acidic residues predominate over residues 134–144 (ATHDEPSRDSF). The domain III, AAA+ region stretch occupies residues 175–391 (YLNRTFTFEN…GALKRVIAHS (217 aa)). Residues glycine 219, glycine 221, lysine 222, and threonine 223 each coordinate ATP. The tract at residues 392 to 511 (HFMGRDITIE…YKNLLRTLTT (120 aa)) is domain IV, binds dsDNA.

This sequence belongs to the DnaA family. As to quaternary structure, oligomerizes as a right-handed, spiral filament on DNA at oriC.

It localises to the cytoplasm. Its function is as follows. Plays an essential role in the initiation and regulation of chromosomal replication. ATP-DnaA binds to the origin of replication (oriC) to initiate formation of the DNA replication initiation complex once per cell cycle. Binds the DnaA box (a 9 base pair repeat at the origin) and separates the double-stranded (ds)DNA. Forms a right-handed helical filament on oriC DNA; dsDNA binds to the exterior of the filament while single-stranded (ss)DNA is stabiized in the filament's interior. The ATP-DnaA-oriC complex binds and stabilizes one strand of the AT-rich DNA unwinding element (DUE), permitting loading of DNA polymerase. After initiation quickly degrades to an ADP-DnaA complex that is not apt for DNA replication. Binds acidic phospholipids. This Pseudomonas syringae pv. tomato (strain ATCC BAA-871 / DC3000) protein is Chromosomal replication initiator protein DnaA.